The sequence spans 425 residues: MDLRYQTGFGSYFETEAHPGALPVGRNSPQKVPFGLYAEQLSGSAFTAPRHENRRTWLYRLRPSAGHEAYQPYAQDKLVSAFPGPATPNRLRWSPLEIPAAPTDFVDGLVSLAGNADAATLGGIAAHVYLVNVSMKNRVFYNADGEMLIVPQMGELTLVTEMGVLKAGPGHIAVIPRGVRFRVEVEGPARGYVCENYGAAFRLPELGPIGANGLANPRDFEAPVAAFEDIDTPTQVIQKFQGALWAATWDHSPLDVVAWHGNLTPYRYDLSRFNTINTVSYDHPDPSIFTVLTSPSDTPGTANCDFVIFPPRWMVAEDTFRPPWFHRNVMSEFMGLIHGAYDAKAGGFVPGGASLHNCMSDHGPDVASHKKATEVVLAPHKIDGTMAFMFESRWVFRPTHLALESAALQSDYDACWTGFPKARLS.

His283 serves as the catalytic Proton acceptor. Positions 326 and 332 each coordinate Fe cation. Tyr341 and His362 together coordinate homogentisate. Residue His362 coordinates Fe cation.

It belongs to the homogentisate dioxygenase family. Hexamer; dimer of trimers. Requires Fe cation as cofactor.

The enzyme catalyses homogentisate + O2 = 4-maleylacetoacetate + H(+). It functions in the pathway amino-acid degradation; L-phenylalanine degradation; acetoacetate and fumarate from L-phenylalanine: step 4/6. Its function is as follows. Involved in the catabolism of homogentisate (2,5-dihydroxyphenylacetate or 2,5-OH-PhAc), a central intermediate in the degradation of phenylalanine and tyrosine. Catalyzes the oxidative ring cleavage of the aromatic ring of homogentisate to yield maleylacetoacetate. This is Homogentisate 1,2-dioxygenase from Caulobacter vibrioides (strain ATCC 19089 / CIP 103742 / CB 15) (Caulobacter crescentus).